The following is a 485-amino-acid chain: UDP-N-acetylmuramate--L-alanine ligase (485 aa).

Residue 112 to 118 (GTHGKTT) participates in ATP binding.

The protein belongs to the MurCDEF family.

It is found in the cytoplasm. It catalyses the reaction UDP-N-acetyl-alpha-D-muramate + L-alanine + ATP = UDP-N-acetyl-alpha-D-muramoyl-L-alanine + ADP + phosphate + H(+). Its pathway is cell wall biogenesis; peptidoglycan biosynthesis. In terms of biological role, cell wall formation. The chain is UDP-N-acetylmuramate--L-alanine ligase from Variovorax paradoxus (strain S110).